The following is a 127-amino-acid chain: Major sperm protein 49 (127 aa).

An N-acetylalanine modification is found at Ala-2. Positions 9–126 (DIQTQPGTKI…RRKNLPIEYN (118 aa)) constitute an MSP domain.

Sperm.

The protein resides in the cell projection. It is found in the pseudopodium. It localises to the cytoplasm. The protein localises to the cytoskeleton. In terms of biological role, central component in molecular interactions underlying sperm crawling. Forms an extensive filament system that extends from sperm villipoda, along the leading edge of the pseudopod. This Caenorhabditis elegans protein is Major sperm protein 49 (msp-49).